Reading from the N-terminus, the 155-residue chain is Large ribosomal subunit protein uL30 (155 aa).

This sequence belongs to the universal ribosomal protein uL30 family. Part of the 50S ribosomal subunit.

This chain is Large ribosomal subunit protein uL30, found in Pyrococcus horikoshii (strain ATCC 700860 / DSM 12428 / JCM 9974 / NBRC 100139 / OT-3).